Here is a 403-residue protein sequence, read N- to C-terminus: Histidine--tRNA ligase (403 aa).

Belongs to the class-II aminoacyl-tRNA synthetase family. Homodimer.

It is found in the cytoplasm. The enzyme catalyses tRNA(His) + L-histidine + ATP = L-histidyl-tRNA(His) + AMP + diphosphate + H(+). The chain is Histidine--tRNA ligase from Sulfurimonas denitrificans (strain ATCC 33889 / DSM 1251) (Thiomicrospira denitrificans (strain ATCC 33889 / DSM 1251)).